The sequence spans 285 residues: Bifunctional protein FolD (285 aa).

NADP(+) is bound by residues 165–167 (GAS) and Ile-232.

The protein belongs to the tetrahydrofolate dehydrogenase/cyclohydrolase family. Homodimer.

The enzyme catalyses (6R)-5,10-methylene-5,6,7,8-tetrahydrofolate + NADP(+) = (6R)-5,10-methenyltetrahydrofolate + NADPH. It catalyses the reaction (6R)-5,10-methenyltetrahydrofolate + H2O = (6R)-10-formyltetrahydrofolate + H(+). Its pathway is one-carbon metabolism; tetrahydrofolate interconversion. Functionally, catalyzes the oxidation of 5,10-methylenetetrahydrofolate to 5,10-methenyltetrahydrofolate and then the hydrolysis of 5,10-methenyltetrahydrofolate to 10-formyltetrahydrofolate. The protein is Bifunctional protein FolD of Sulfurihydrogenibium sp. (strain YO3AOP1).